Reading from the N-terminus, the 141-residue chain is MYACSKFVSTRSLIRSTSQLLSRPLSAVELKRPQMPTDEGLSCLAVRRPLTSLIPSRSFQTSAISRDIDTAAKFIGAGAATVGVAGSGAGIGTVFGSLIIGYARNPSLKQQLFSYAILGFALSEAMGLFCLMVAFLILFAM.

The N-terminal 66 residues, 1–66 (MYACSKFVST…RSFQTSAISR (66 aa)), are a transit peptide targeting the mitochondrion. Residues 82-102 (VGVAGSGAGIGTVFGSLIIGY) traverse the membrane as a helical segment. Lys109 bears the N6,N6,N6-trimethyllysine mark. A helical membrane pass occupies residues 117–137 (ILGFALSEAMGLFCLMVAFLI).

The protein belongs to the ATPase C chain family. As to quaternary structure, F-type ATPases have 2 components, CF(1) - the catalytic core - and CF(0) - the membrane proton channel. CF(1) has five subunits: alpha(3), beta(3), gamma(1), delta(1), epsilon(1). CF(0) has three main subunits: a, b and c. Interacts with DNAJC30; interaction is direct. In terms of processing, trimethylated by ATPSCKMT at Lys-109. Methylation is required for proper incorporation of the C subunit into the ATP synthase complex and mitochondrial respiration.

It is found in the mitochondrion membrane. Mitochondrial membrane ATP synthase (F(1)F(0) ATP synthase or Complex V) produces ATP from ADP in the presence of a proton gradient across the membrane which is generated by electron transport complexes of the respiratory chain. F-type ATPases consist of two structural domains, F(1) - containing the extramembraneous catalytic core and F(0) - containing the membrane proton channel, linked together by a central stalk and a peripheral stalk. During catalysis, ATP synthesis in the catalytic domain of F(1) is coupled via a rotary mechanism of the central stalk subunits to proton translocation. Part of the complex F(0) domain. A homomeric c-ring of probably 10 subunits is part of the complex rotary element. This Rattus norvegicus (Rat) protein is ATP synthase F(0) complex subunit C2, mitochondrial.